The chain runs to 235 residues: Carbohydrate deacetylase (235 aa).

Residues His61 and His124 each coordinate Mg(2+).

It belongs to the YdjC deacetylase family. It depends on Mg(2+) as a cofactor.

In terms of biological role, probably catalyzes the deacetylation of acetylated carbohydrates an important step in the degradation of oligosaccharides. This is Carbohydrate deacetylase from Bacillus cereus (strain B4264).